The primary structure comprises 349 residues: Anthranilate phosphoribosyltransferase (349 aa).

5-phospho-alpha-D-ribose 1-diphosphate contacts are provided by residues Gly-82, Gly-85–Asp-86, Asn-92–Thr-95, Lys-110–Ser-118, and Ser-122. Gly-82 is a binding site for anthranilate. Ser-94 is a Mg(2+) binding site. An anthranilate-binding site is contributed by Asn-113. Anthranilate is bound at residue Arg-168. Positions 227 and 228 each coordinate Mg(2+).

The protein belongs to the anthranilate phosphoribosyltransferase family. As to quaternary structure, homodimer. Mg(2+) serves as cofactor.

It carries out the reaction N-(5-phospho-beta-D-ribosyl)anthranilate + diphosphate = 5-phospho-alpha-D-ribose 1-diphosphate + anthranilate. It participates in amino-acid biosynthesis; L-tryptophan biosynthesis; L-tryptophan from chorismate: step 2/5. Functionally, catalyzes the transfer of the phosphoribosyl group of 5-phosphorylribose-1-pyrophosphate (PRPP) to anthranilate to yield N-(5'-phosphoribosyl)-anthranilate (PRA). The polypeptide is Anthranilate phosphoribosyltransferase (Acinetobacter baumannii (strain ATCC 17978 / DSM 105126 / CIP 53.77 / LMG 1025 / NCDC KC755 / 5377)).